The primary structure comprises 202 residues: MNESLVELSAYLKNKLGDKLEETILAFGELTIVSRLDAITGVLMFVRDDSRCQFINLTDISGVDYPSRDKRFDVSYQLLAPRHNLRLRIKVRTDENTPVASACSIYPGAEWYEREAYDMYGILFSGHPDLRRILTDYGFEGHPLRKDFPVTGFVECRYDNEAKRVIYEPVVLRQEMRNFDFLSPWEGAQYVLPCNEKAEGEK.

It belongs to the complex I 30 kDa subunit family. As to quaternary structure, NDH-1 is composed of 14 different subunits. Subunits NuoB, C, D, E, F, and G constitute the peripheral sector of the complex.

The protein resides in the cell inner membrane. The enzyme catalyses a quinone + NADH + 5 H(+)(in) = a quinol + NAD(+) + 4 H(+)(out). Functionally, NDH-1 shuttles electrons from NADH, via FMN and iron-sulfur (Fe-S) centers, to quinones in the respiratory chain. The immediate electron acceptor for the enzyme in this species is believed to be ubiquinone. Couples the redox reaction to proton translocation (for every two electrons transferred, four hydrogen ions are translocated across the cytoplasmic membrane), and thus conserves the redox energy in a proton gradient. The polypeptide is NADH-quinone oxidoreductase subunit C (Bartonella quintana (strain Toulouse) (Rochalimaea quintana)).